A 549-amino-acid polypeptide reads, in one-letter code: MIPLSLSETTLPTVTTQAPDLDYWLLSPLLVVFAAGVIGVIVEAFVPAQRRYSIQTALAMVAVGVAFVLTLVQVGALPADSAGLTLAFATVVVDRPSLFFQGVILALALASLLLIAERRDGESAFTGQAAAVPGSEEERAHVLAGSQHTEVYPLVMFAVLGMQLFTAANDFLTMFIALEVMSLPLYLLCGLARRRRLFSQEAALKYFLLGAFSSAFFLFGIAMVYGYAGAVEFAAVRAAGSSGGLIDGGEPLLLIGIAMIGVGMLFKVGTVPFHNWKPDVYQGAPTPITALMASGTLVAAFGAMLRVFYVAFGTTVAQWRPMLWVVAILTMVVAAVIAVTQRDIKRLLAYSSVVHAGFILTAVVAANADGLTGAMFYLAAYGFTTVGAFAIVTLVRNPDNGAEAGDLTQWAGLGRTSPFLAASLGLFLLAFAGIPLTSGFIGKFAVFEAAVAAGATPLVVVGVLSSAVTAFFYVRIIVLMFFAEPAENAPRVLKPGILTGTTVGLGVAATLLLGILPGPVLEHVIPQPAAETSEAVAAEHTAADSLFAR.

14 helical membrane-spanning segments follow: residues Leu-26 to Val-46, Ala-57 to Leu-77, Pro-96 to Ala-116, His-148 to Ala-168, Phe-171 to Leu-191, Tyr-206 to Gly-226, Leu-253 to Phe-273, Leu-297 to Ala-317, Pro-321 to Gln-341, Leu-347 to Asn-367, Met-375 to Val-395, Ala-421 to Ile-441, Ser-466 to Ala-486, and Gly-496 to Leu-516.

This sequence belongs to the complex I subunit 2 family. In terms of assembly, NDH-1 is composed of 14 different subunits. Subunits NuoA, H, J, K, L, M, N constitute the membrane sector of the complex.

Its subcellular location is the cell membrane. The catalysed reaction is a quinone + NADH + 5 H(+)(in) = a quinol + NAD(+) + 4 H(+)(out). Functionally, NDH-1 shuttles electrons from NADH, via FMN and iron-sulfur (Fe-S) centers, to quinones in the respiratory chain. The immediate electron acceptor for the enzyme in this species is believed to be a menaquinone. Couples the redox reaction to proton translocation (for every two electrons transferred, four hydrogen ions are translocated across the cytoplasmic membrane), and thus conserves the redox energy in a proton gradient. In Thermobifida fusca (strain YX), this protein is NADH-quinone oxidoreductase subunit N.